A 258-amino-acid chain; its full sequence is uncharacterized protein (258 aa).

The next 7 membrane-spanning stretches (helical) occupy residues 8–28 (VFLA…IVWF), 38–58 (VFFI…GGVH), 70–90 (EAMQ…GIFE), 121–141 (LEAI…AFAI), 176–196 (LGGI…LLVL), 204–224 (PLFL…AVLY), and 231–251 (HAAA…YWIV).

Its subcellular location is the cell membrane. This is an uncharacterized protein from Bacillus subtilis (strain 168).